A 117-amino-acid polypeptide reads, in one-letter code: Non-specific lipid-transfer protein 2 (117 aa).

A signal peptide spans 1–25; that stretch reads MAGLMKLACLVLACMIVAGPITSNA. 4 disulfide bridges follow: Cys-29–Cys-76, Cys-39–Cys-53, Cys-54–Cys-99, and Cys-74–Cys-113.

It belongs to the plant LTP family.

Functionally, plant non-specific lipid-transfer proteins transfer phospholipids as well as galactolipids across membranes. May play a role in wax or cutin deposition in the cell walls of expanding epidermal cells and certain secretory tissues. This Brassica napus (Rape) protein is Non-specific lipid-transfer protein 2 (LTP2).